The chain runs to 88 residues: Large ribosomal subunit protein bL27 (88 aa).

A disordered region spans residues 1–23; it reads MAHKKGTGSTRNGRDSNAQRLGV. The segment covering 7–19 has biased composition (polar residues); that stretch reads TGSTRNGRDSNAQ.

It belongs to the bacterial ribosomal protein bL27 family.

The polypeptide is Large ribosomal subunit protein bL27 (rpmA) (Synechococcus elongatus (strain ATCC 33912 / PCC 7942 / FACHB-805) (Anacystis nidulans R2)).